The following is a 482-amino-acid chain: Glutamyl-tRNA(Gln) amidotransferase subunit A (482 aa).

Residues Lys-75 and Ser-150 each act as charge relay system in the active site. Residue Ser-174 is the Acyl-ester intermediate of the active site.

It belongs to the amidase family. GatA subfamily. In terms of assembly, heterotrimer of A, B and C subunits.

It carries out the reaction L-glutamyl-tRNA(Gln) + L-glutamine + ATP + H2O = L-glutaminyl-tRNA(Gln) + L-glutamate + ADP + phosphate + H(+). In terms of biological role, allows the formation of correctly charged Gln-tRNA(Gln) through the transamidation of misacylated Glu-tRNA(Gln) in organisms which lack glutaminyl-tRNA synthetase. The reaction takes place in the presence of glutamine and ATP through an activated gamma-phospho-Glu-tRNA(Gln). This Thermosynechococcus vestitus (strain NIES-2133 / IAM M-273 / BP-1) protein is Glutamyl-tRNA(Gln) amidotransferase subunit A.